We begin with the raw amino-acid sequence, 186 residues long: Nicotinamide-nucleotide adenylyltransferase (186 aa).

It belongs to the archaeal NMN adenylyltransferase family.

Its subcellular location is the cytoplasm. It catalyses the reaction beta-nicotinamide D-ribonucleotide + ATP + H(+) = diphosphate + NAD(+). It participates in cofactor biosynthesis; NAD(+) biosynthesis; NAD(+) from nicotinamide D-ribonucleotide: step 1/1. This Pyrococcus horikoshii (strain ATCC 700860 / DSM 12428 / JCM 9974 / NBRC 100139 / OT-3) protein is Nicotinamide-nucleotide adenylyltransferase.